Reading from the N-terminus, the 300-residue chain is ETS homologous factor (300 aa).

Residues 29 to 115 (PTCNVSSGFF…SNLQHLKWNG (87 aa)) form the PNT domain. The disordered stretch occupies residues 181–203 (VAESPDMKKEQDHPVKSHTKKHN). The segment covering 185 to 195 (PDMKKEQDHPV) has biased composition (basic and acidic residues). The segment at residues 207 to 289 (THLWEFIRDI…DGRRLVYKFG (83 aa)) is a DNA-binding region (ETS).

This sequence belongs to the ETS family. Highly expressed in kidney and lung, weakly in skeletal muscle, heart, and liver, and not detected in brain, spleen or testis.

The protein localises to the nucleus. Its function is as follows. Transcriptional activator that may play a role in regulating epithelial cell differentiation and proliferation. May act as a repressor for a specific subset of ETS/AP-1-responsive genes, and as a modulator of the nuclear response to mitogen-activated protein kinase signaling cascades. Binds to DNA sequences containing the consensus nucleotide core sequence GGAA. Involved in regulation of TNFRSF10B/DR5 expression through Ets-binding sequences on the TNFRSF10B/DR5 promoter. The polypeptide is ETS homologous factor (Mus musculus (Mouse)).